We begin with the raw amino-acid sequence, 31 residues long: U6-ctenitoxin-Co1a (31 aa).

Cystine bridges form between cysteine 2–cysteine 18 and cysteine 9–cysteine 23.

Expressed by the venom gland.

It is found in the secreted. In terms of biological role, antagonist of L-type calcium channels (Cav1/CACNA1). The polypeptide is U6-ctenitoxin-Co1a (Ctenus ornatus (Brazilian spider)).